Consider the following 381-residue polypeptide: Homoserine O-succinyltransferase (381 aa).

The AB hydrolase-1 domain maps to 45–360 (NAVLVCHALN…PHGHDAFLLD (316 aa)). Serine 151 acts as the Nucleophile in catalysis. Arginine 221 lines the substrate pocket. Active-site residues include aspartate 321 and histidine 354. Aspartate 355 contacts substrate.

Belongs to the AB hydrolase superfamily. MetX family. Homodimer.

It is found in the cytoplasm. The enzyme catalyses L-homoserine + succinyl-CoA = O-succinyl-L-homoserine + CoA. It participates in amino-acid biosynthesis; L-methionine biosynthesis via de novo pathway; O-succinyl-L-homoserine from L-homoserine: step 1/1. In terms of biological role, transfers a succinyl group from succinyl-CoA to L-homoserine, forming succinyl-L-homoserine. The sequence is that of Homoserine O-succinyltransferase from Paraburkholderia phymatum (strain DSM 17167 / CIP 108236 / LMG 21445 / STM815) (Burkholderia phymatum).